Reading from the N-terminus, the 546-residue chain is ATP-dependent rRNA helicase RRP3 (546 aa).

The tract at residues 1-108 (MSDFKRRKLE…DEEAEAQAAA (108 aa)) is disordered. Acidic residues-rich tracts occupy residues 60 to 77 (SEEDEDEFGGFSGEEEED) and 94 to 103 (EAEQSDEEAE). The short motif at 115–143 (KTFADLGVREELCDACENLGYKTATPIQT) is the Q motif element. The Helicase ATP-binding domain occupies 146–318 (IPLALAGKDI…RAALKNPVRV (173 aa)). 159–166 (AETGSGKT) serves as a coordination point for ATP. Residues 265–268 (DEAD) carry the DEAD box motif. In terms of domain architecture, Helicase C-terminal spans 342 to 490 (YKDLYLIHLL…EEKVSRDEVM (149 aa)). Residues 504–515 (VREMKDLHDQRK) show a composition bias toward basic and acidic residues. A disordered region spans residues 504 to 546 (VREMKDLHDQRKSGRGGRGGGRGGGRGGRGRGGRRDNMDMDEG). Positions 519–530 (GGRGGGRGGGRG) are enriched in gly residues. A compositionally biased stretch (basic and acidic residues) spans 536–546 (GRRDNMDMDEG).

The protein belongs to the DEAD box helicase family. DDX47/RRP3 subfamily. In terms of assembly, interacts with the SSU processome.

Its subcellular location is the nucleus. The enzyme catalyses ATP + H2O = ADP + phosphate + H(+). ATP-dependent rRNA helicase required for pre-ribosomal RNA processing. Involved in the maturation of the 35S-pre-rRNA and to its cleavage to mature 18S rRNA. This Phaeosphaeria nodorum (strain SN15 / ATCC MYA-4574 / FGSC 10173) (Glume blotch fungus) protein is ATP-dependent rRNA helicase RRP3.